Here is a 126-residue protein sequence, read N- to C-terminus: Large ribosomal subunit protein bL12 (126 aa).

The protein belongs to the bacterial ribosomal protein bL12 family. In terms of assembly, homodimer. Part of the ribosomal stalk of the 50S ribosomal subunit. Forms a multimeric L10(L12)X complex, where L10 forms an elongated spine to which 2 to 4 L12 dimers bind in a sequential fashion. Binds GTP-bound translation factors.

Functionally, forms part of the ribosomal stalk which helps the ribosome interact with GTP-bound translation factors. Is thus essential for accurate translation. In Moorella thermoacetica (strain ATCC 39073 / JCM 9320), this protein is Large ribosomal subunit protein bL12.